A 688-amino-acid chain; its full sequence is PR domain zinc finger protein 8 (688 aa).

In terms of domain architecture, SET spans 16–131 (KAVQQCLTDI…KDEELLVWYG (116 aa)). Y130 contributes to the S-adenosyl-L-methionine binding site. A C2H2-type 1 zinc finger spans residues 154 to 182 (YTCLECSQRFQFEFPYVAHLRFRCPKRLH). 2 disordered regions span residues 184–309 (TDAN…GCKG) and 397–506 (EEAA…PARS). The span at 192-208 (QGGGLGTKDHGGGGGGK) shows a compositional bias: gly residues. Composition is skewed to low complexity over residues 209-219 (EQQQQQQQQQQ) and 275-284 (GSSSCVAAPG). Composition is skewed to gly residues over residues 414 to 424 (AGGGVAGGGSN) and 470 to 489 (LGGGGGAGTAGTAGGSGGGQ). 2 C2H2-type zinc fingers span residues 624 to 647 (NWCAKCNASFRMTSDLVYHMRSHH) and 665 to 687 (LKCPICNESFRERHHLSRHMTSH).

Belongs to the class V-like SAM-binding methyltransferase superfamily. As to quaternary structure, interacts with BHLHE22. Interacts with EPM2A and NHLRC1. This interaction sequesters EPM2A and NHLRC1 to the nucleus. As to expression, expressed in brain, heart, liver, testes, retina. Highest expression is observed in the retina and hippocampus; moderately expressed in the cortex and cerebellum. In the retina, it is expressed in bipolar and amacrine cells.

The protein resides in the nucleus. In terms of biological role, probable histone methyltransferase, preferentially acting on 'Lys-9' of histone H3. Histone methyltransferase activity has not been confirmed in other species. Involved in the control of steroidogenesis through transcriptional repression of steroidogenesis marker genes such as CYP17A1 and LHCGR. Forms with BHLHE22 a transcriptional repressor complex controlling genes involved in neural development and neuronal differentiation. In the retina, it is required for rod bipolar and type 2 OFF-cone bipolar cell survival. This chain is PR domain zinc finger protein 8 (Prdm8), found in Mus musculus (Mouse).